Consider the following 369-residue polypeptide: Cobalt-precorrin-5B C(1)-methyltransferase (369 aa).

It belongs to the CbiD family.

The catalysed reaction is Co-precorrin-5B + S-adenosyl-L-methionine = Co-precorrin-6A + S-adenosyl-L-homocysteine. It functions in the pathway cofactor biosynthesis; adenosylcobalamin biosynthesis; cob(II)yrinate a,c-diamide from sirohydrochlorin (anaerobic route): step 6/10. Its function is as follows. Catalyzes the methylation of C-1 in cobalt-precorrin-5B to form cobalt-precorrin-6A. This chain is Cobalt-precorrin-5B C(1)-methyltransferase, found in Prosthecochloris aestuarii (strain DSM 271 / SK 413).